The primary structure comprises 364 residues: Nuclear hormone receptor family member nhr-53 (364 aa).

A DNA-binding region (nuclear receptor) is located at residues 20–95 (PSYCLICCEV…VGMQRSSVQQ (76 aa)). NR C4-type zinc fingers lie at residues 23–43 (CLIC…CRAC) and 59–83 (CPKN…YEKC). The NR LBD domain occupies 110-363 (REEPVLDTMR…KNLYDMFSPT (254 aa)).

It belongs to the nuclear hormone receptor family.

It is found in the nucleus. Functionally, orphan nuclear receptor. The sequence is that of Nuclear hormone receptor family member nhr-53 (nhr-53) from Caenorhabditis elegans.